The sequence spans 649 residues: Endoplasmic reticulum membrane protein 65 (649 aa).

A disordered region spans residues 1-55; that stretch reads MGSNTSPGQADPLESENESSLTSRFLPNKRDGGKDNESVIPEKEEPDLNEPVLAV. Residues 1–165 lie on the Cytoplasmic side of the membrane; sequence MGSNTSPGQA…LATPYAIEKT (165 aa). Over residues 28-43 the composition is skewed to basic and acidic residues; sequence NKRDGGKDNESVIPEK. A Phosphoserine modification is found at serine 94. The chain crosses the membrane as a helical span at residues 166 to 186; it reads FLFGWFVSVDSFLYIFTLFPI. At 187 to 302 the chain is on the lumenal side; sequence RVLISFFTLS…NFWNPAGWMT (116 aa). N-linked (GlcNAc...) asparagine glycosylation is present at asparagine 215. A helical membrane pass occupies residues 303–323; the sequence is FFYYFAISLAYMVLHTLVLLY. Residues 324–366 are Cytoplasmic-facing; the sequence is QIITLNVTVNSYSNAVLALLMSNQLVEIKGAVFKKFEKENLFQ. Residues 367 to 387 traverse the membrane as a helical segment; the sequence is LTCSDVVERFQITIMVIIIFL. Residues 388–414 are Lumenal-facing; the sequence is RNLAELYTTSSLDQPLLTFKRLKTLLA. Residues 415 to 435 form a helical membrane-spanning segment; the sequence is PFFWVIGSELFVDWLKHAFII. Residues 436–479 lie on the Cytoplasmic side of the membrane; that stretch reads KFNYIKPSIYSRFTDVLCHDYVASGAQLTQTVTGCSQQVARRMG. The helical transmembrane segment at 480-500 threads the bilayer; the sequence is LPVLPLVCVFIRTSMQTWSMF. The Lumenal portion of the chain corresponds to 501–557; the sequence is RSTHSMKQEIAKSIGTIFPTKDNYVYYLPNKEANTYNAGKEASWETLLLSVVRGKSG. Residues 558–578 form a helical membrane-spanning segment; sequence IAFLFFMAIMLKLLLGKAILA. Topologically, residues 579–649 are cytoplasmic; it reads ITQSRYESMQ…RYAMHSKRIW (71 aa).

The protein belongs to the TAPT1 family. Interacts with slp1.

The protein localises to the endoplasmic reticulum membrane. Functionally, may be involved in membrane protein folding. The sequence is that of Endoplasmic reticulum membrane protein 65 from Schizosaccharomyces pombe (strain 972 / ATCC 24843) (Fission yeast).